The sequence spans 37 residues: Cortex morphogenetic protein A (37 aa).

Can form a complex with SpoIVA and ClpX.

The protein resides in the forespore. Functionally, ensures proper spore envelope assembly. Represses premature cortex assembly until coat assembly successfully initiates. Also participates in a quality-control pathway that selectively removes defective sporulating cells through regulated cell death. Acts as an adaptator that delivers SpoIVA to the ClpXP proteolytic machinery for degradation, specifically in cells that improperly assemble the spore envelope. The sequence is that of Cortex morphogenetic protein A from Bacillus subtilis (strain 168).